The primary structure comprises 364 residues: 3-isopropylmalate dehydrogenase (364 aa).

76–89 (GPKWEKLPPNEQPE) is a binding site for NAD(+). 4 residues coordinate substrate: arginine 97, arginine 107, arginine 136, and aspartate 225. Mg(2+) is bound by residues aspartate 225, aspartate 249, and aspartate 253. 283-295 (GSAPDIAGKGIAN) is an NAD(+) binding site.

This sequence belongs to the isocitrate and isopropylmalate dehydrogenases family. LeuB type 1 subfamily. In terms of assembly, homodimer. Requires Mg(2+) as cofactor. Mn(2+) serves as cofactor.

It is found in the cytoplasm. The catalysed reaction is (2R,3S)-3-isopropylmalate + NAD(+) = 4-methyl-2-oxopentanoate + CO2 + NADH. Its pathway is amino-acid biosynthesis; L-leucine biosynthesis; L-leucine from 3-methyl-2-oxobutanoate: step 3/4. Its function is as follows. Catalyzes the oxidation of 3-carboxy-2-hydroxy-4-methylpentanoate (3-isopropylmalate) to 3-carboxy-4-methyl-2-oxopentanoate. The product decarboxylates to 4-methyl-2 oxopentanoate. This chain is 3-isopropylmalate dehydrogenase, found in Shewanella oneidensis (strain ATCC 700550 / JCM 31522 / CIP 106686 / LMG 19005 / NCIMB 14063 / MR-1).